A 600-amino-acid chain; its full sequence is Proline--tRNA ligase (600 aa).

The protein belongs to the class-II aminoacyl-tRNA synthetase family. ProS type 1 subfamily. Homodimer.

The protein resides in the cytoplasm. The catalysed reaction is tRNA(Pro) + L-proline + ATP = L-prolyl-tRNA(Pro) + AMP + diphosphate. In terms of biological role, catalyzes the attachment of proline to tRNA(Pro) in a two-step reaction: proline is first activated by ATP to form Pro-AMP and then transferred to the acceptor end of tRNA(Pro). As ProRS can inadvertently accommodate and process non-cognate amino acids such as alanine and cysteine, to avoid such errors it has two additional distinct editing activities against alanine. One activity is designated as 'pretransfer' editing and involves the tRNA(Pro)-independent hydrolysis of activated Ala-AMP. The other activity is designated 'posttransfer' editing and involves deacylation of mischarged Ala-tRNA(Pro). The misacylated Cys-tRNA(Pro) is not edited by ProRS. This is Proline--tRNA ligase from Synechococcus elongatus (strain ATCC 33912 / PCC 7942 / FACHB-805) (Anacystis nidulans R2).